The sequence spans 701 residues: MEEGSSTARAVVRSTCGFTVGLSLATAFGLLELLGEGHSPFGCLVTTVTLAAFLSLGMGFSRQVRVSVLLLLPQAFSKQSRLLLLVASFGLVLQGPCANTLQNFTRASEAVACGAELALNQTAEMLERAKQPLISALSKIKAIAQKAKVVGDRIRKFFRSIIDAVKHIARCLQNVWYWLLHIGDMCNSELGNPYSKCTQVFDDAKIHCMKVVSGFPHLCYALLPYKLLVCGLASLVQKFCVLPSYLEFFLRTVIRTPVMKLLGKLRREFEFNMTATHYFSVDLNSSRSLSQVALDLQEAVSMKLYTAREALSLMGYTMPLLIGFLYIQALCYRYYYLNSDKFDNVYITRRFLDMEAVRSLAGMPTVLPLSSHEAKHYIQPDSMFLSQREQMFYTLEIFNLTRHLLIMLLLVFLDYGVFWLLDLARYHLQGEIVARSPVVVSISVEGSGYSGNIYRDLASAFDVMQQGNVSVLSPRCTLHPSEPDAKGYIVIGTMYGLCFFVTLFGSYVSRLRRAICASYYPSREQERITYLYNMLLSHRTNITATVQRAVRRRSADQGQMNILQVLAIRLPFLRPLLGPFSLQQSYCMGCGEPEDKGGMENFVSCSTPGCRGLYCPTCFRLLNNTCSVCSAPLSNQGHLDLELDSSDEESPQLWLAAARRKAPEQELKLRQQLQEALGTNLSDKSTSKPERAGNRNQDRKQ.

4 helical membrane-spanning segments follow: residues 15-35, 40-60, 82-102, and 215-235; these read TCGF…ELLG, PFGC…GMGF, LLLL…NTLQ, and FPHL…LASL. 2 N-linked (GlcNAc...) asparagine glycosylation sites follow: Asn-272 and Asn-284. 2 consecutive transmembrane segments (helical) span residues 310–330 and 404–424; these read ALSL…IQAL and LLIM…LDLA. Asn-468 carries an N-linked (GlcNAc...) asparagine glycan. Residues 488 to 508 traverse the membrane as a helical segment; sequence YIVIGTMYGLCFFVTLFGSYV. The segment at 673-701 is disordered; sequence LQEALGTNLSDKSTSKPERAGNRNQDRKQ. Over residues 685–701 the composition is skewed to basic and acidic residues; the sequence is STSKPERAGNRNQDRKQ.

Interacts with DCST1. As to expression, expressed in testis.

The protein resides in the cytoplasmic vesicle. It localises to the secretory vesicle. Its subcellular location is the acrosome membrane. Essential sperm cell-surface protein required for sperm-egg fusion and fertilization. In Mus musculus (Mouse), this protein is DC-STAMP domain-containing protein 2.